The chain runs to 102 residues: NADH-quinone oxidoreductase subunit K (102 aa).

A run of 3 helical transmembrane segments spans residues 5 to 25 (IAHY…GIFL), 31 to 51 (IIIL…FIAF), and 66 to 86 (FVLT…VVFF).

This sequence belongs to the complex I subunit 4L family. In terms of assembly, NDH-1 is composed of 14 different subunits. Subunits NuoA, H, J, K, L, M, N constitute the membrane sector of the complex.

It is found in the cell inner membrane. It carries out the reaction a quinone + NADH + 5 H(+)(in) = a quinol + NAD(+) + 4 H(+)(out). In terms of biological role, NDH-1 shuttles electrons from NADH, via FMN and iron-sulfur (Fe-S) centers, to quinones in the respiratory chain. The immediate electron acceptor for the enzyme in this species is believed to be ubiquinone. Couples the redox reaction to proton translocation (for every two electrons transferred, four hydrogen ions are translocated across the cytoplasmic membrane), and thus conserves the redox energy in a proton gradient. This is NADH-quinone oxidoreductase subunit K from Chelativorans sp. (strain BNC1).